Here is a 168-residue protein sequence, read N- to C-terminus: Nuclear cap-binding protein subunit 2 (168 aa).

Residues tyrosine 23, tyrosine 46, arginine 115–aspartate 119, arginine 126–arginine 130, and glutamine 136–valine 137 contribute to the mRNA site. Residues serine 43–glycine 121 enclose the RRM domain.

Belongs to the RRM NCBP2 family. Component of the nuclear cap-binding complex (CBC), a heterodimer composed of NCBP1/CBP80 and NCBP2/CBP20 that interacts with m7GpppG-capped RNA.

The protein localises to the nucleus. The protein resides in the cytoplasm. In terms of biological role, component of the cap-binding complex (CBC), which binds co-transcriptionally to the 5' cap of pre-mRNAs and is involved in various processes such as pre-mRNA splicing, translation regulation, nonsense-mediated mRNA decay, RNA-mediated gene silencing (RNAi) by microRNAs (miRNAs) and mRNA export. The CBC complex is involved in mRNA export from the nucleus, leading to the recruitment of the mRNA export machinery to the 5' end of mRNA and to mRNA export in a 5' to 3' direction through the nuclear pore. The CBC complex is also involved in mediating U snRNA and intronless mRNAs export from the nucleus. The CBC complex is essential for a pioneer round of mRNA translation, before steady state translation when the CBC complex is replaced by cytoplasmic cap-binding protein eIF4E. The pioneer round of mRNA translation mediated by the CBC complex plays a central role in nonsense-mediated mRNA decay (NMD), NMD only taking place in mRNAs bound to the CBC complex, but not on eIF4E-bound mRNAs. The CBC complex enhances NMD in mRNAs containing at least one exon-junction complex (EJC), promoting the interaction between UPF1 and UPF2. The CBC complex is also involved in 'failsafe' NMD, which is independent of the EJC complex, while it does not participate in Staufen-mediated mRNA decay (SMD). During cell proliferation, the CBC complex is also involved in microRNAs (miRNAs) biogenesis via its interaction with SRRT/ARS2, thereby being required for miRNA-mediated RNA interference. The CBC complex also acts as a negative regulator of PARN, thereby acting as an inhibitor of mRNA deadenylation. In the CBC complex, NCBP2/CBP20 recognizes and binds capped RNAs (m7GpppG-capped RNA) but requires NCBP1/CBP80 to stabilize the movement of its N-terminal loop and lock the CBC into a high affinity cap-binding state with the cap structure. The conventional cap-binding complex with NCBP2 binds both small nuclear RNA (snRNA) and messenger (mRNA) and is involved in their export from the nucleus. The polypeptide is Nuclear cap-binding protein subunit 2 (NCBP2) (Gallus gallus (Chicken)).